The chain runs to 634 residues: Heat shock 70-related protein 1, mitochondrial (634 aa).

A mitochondrion-targeting transit peptide spans 1–20 (MFARRVCGSAAASAACLARH). Residues 538–614 (SEQHAEADRV…AAATDKLQKA (77 aa)) are a coiled coil.

It belongs to the heat shock protein 70 family.

Its subcellular location is the mitochondrion. The protein is Heat shock 70-related protein 1, mitochondrial (HSP70.1) of Leishmania major.